The following is a 328-amino-acid chain: Tellurite resistance protein TehA homolog (328 aa).

Residues 1-21 are Cytoplasmic-facing; the sequence is MLHFAHIFQNKVHTMNITKPF. Residues 22–42 traverse the membrane as a helical segment; it reads PLPTGYFGIPLGLAALSLAWF. Topologically, residues 43 to 49 are periplasmic; sequence HLENLFP. Residues 50–73 form a helical membrane-spanning segment; that stretch reads AARMVSDVLGIVASAVWILFILMY. The Cytoplasmic segment spans residues 74 to 93; that stretch reads AYKLRYYFEEVRAEYHSPVR. A helical transmembrane segment spans residues 94–112; that stretch reads FSFIALIPITTMLVGDILY. The Periplasmic portion of the chain corresponds to 113–115; that stretch reads RWN. The chain crosses the membrane as a helical span at residues 116 to 141; it reads PLIAEVLIWIGTIGQLLFSTLRVSEL. Topologically, residues 142–153 are cytoplasmic; it reads WQGGVFEQKSTH. Residues 154–174 traverse the membrane as a helical segment; the sequence is PSFYLPAVAANFTSASSLALL. Over 175–176 the chain is Periplasmic; that stretch reads GY. Residues 177 to 204 form a helical membrane-spanning segment; sequence HDLGYLFFGAGMIAWIIFEPVLLQHLRI. The Cytoplasmic segment spans residues 205 to 208; the sequence is SSLE. A helical membrane pass occupies residues 209-232; it reads PQFRATMGIVLAPAFVCVSAYLSI. Over 233 to 238 the chain is Periplasmic; sequence NHGEVD. A helical transmembrane segment spans residues 239-262; the sequence is TLAKILWGYGFLQLFFLLRLFPWI. Topologically, residues 263-268 are cytoplasmic; sequence VEKGLN. The chain crosses the membrane as a helical span at residues 269–289; that stretch reads IGLWAFSFGLASMANSATAFY. Residues 290-294 are Periplasmic-facing; the sequence is HGNVL. A helical transmembrane segment spans residues 295-321; sequence QGVSIFAFVFSNVMIGLLVLMTIYKLT. Topologically, residues 322-328 are cytoplasmic; it reads KGQFFLK.

It belongs to the tellurite-resistance/dicarboxylate transporter (TDT) family. As to quaternary structure, homotrimer. Each subunit forms a channel.

It localises to the cell inner membrane. Its function is as follows. Ion channel involved in potassium tellurite resistance. The chain is Tellurite resistance protein TehA homolog (tehA) from Haemophilus influenzae (strain ATCC 51907 / DSM 11121 / KW20 / Rd).